The sequence spans 489 residues: IPT/TIG domain-containing protein BACOVA_02650 (489 aa).

The first 27 residues, 1 to 27, serve as a signal peptide directing secretion; that stretch reads MKSIYKYLDTRLFLIGLLVLPFLAVVS. A lipid anchor (N-palmitoyl cysteine) is attached at Cys28. The S-diacylglycerol cysteine moiety is linked to residue Cys28. IPT/TIG domains are found at residues 57 to 103, 136 to 204, and 232 to 304; these read VNPG…PNEL, PYIT…TAPA, and PVVT…AIGG.

It is found in the cell outer membrane. The protein operates within glucan metabolism; xyloglucan degradation. Functionally, polysaccharide-binding protein present at the surface of the cell. Probably mediates xyloglucan-binding before xyloglucan transport in the periplasm for degradation. This Bacteroides ovatus (strain ATCC 8483 / DSM 1896 / JCM 5824 / BCRC 10623 / CCUG 4943 / NCTC 11153) protein is IPT/TIG domain-containing protein BACOVA_02650.